We begin with the raw amino-acid sequence, 71 residues long: Small ribosomal subunit protein bS21 (71 aa).

The interval 40–71 (KPTQVRKRKQAAAVKRHMKRLNREQQRRQRPY) is disordered. Residues 43–59 (QVRKRKQAAAVKRHMKR) are compositionally biased toward basic residues. Residues 60 to 71 (LNREQQRRQRPY) show a composition bias toward basic and acidic residues.

This sequence belongs to the bacterial ribosomal protein bS21 family.

The chain is Small ribosomal subunit protein bS21 from Halorhodospira halophila (strain DSM 244 / SL1) (Ectothiorhodospira halophila (strain DSM 244 / SL1)).